The primary structure comprises 256 residues: 5'-nucleotidase SurE (256 aa).

Positions 8, 9, 40, and 92 each coordinate a divalent metal cation.

It belongs to the SurE nucleotidase family. The cofactor is a divalent metal cation.

The protein localises to the cytoplasm. It catalyses the reaction a ribonucleoside 5'-phosphate + H2O = a ribonucleoside + phosphate. In terms of biological role, nucleotidase that shows phosphatase activity on nucleoside 5'-monophosphates. This Rhizobium meliloti (strain 1021) (Ensifer meliloti) protein is 5'-nucleotidase SurE.